Reading from the N-terminus, the 97-residue chain is Putative septation protein SpoVG (97 aa).

Belongs to the SpoVG family.

In terms of biological role, could be involved in septation. The protein is Putative septation protein SpoVG of Borreliella burgdorferi (strain ATCC 35210 / DSM 4680 / CIP 102532 / B31) (Borrelia burgdorferi).